The chain runs to 466 residues: ATP synthase subunit beta (466 aa).

153–160 provides a ligand contact to ATP; the sequence is GGAGVGKT.

This sequence belongs to the ATPase alpha/beta chains family. As to quaternary structure, F-type ATPases have 2 components, CF(1) - the catalytic core - and CF(0) - the membrane proton channel. CF(1) has five subunits: alpha(3), beta(3), gamma(1), delta(1), epsilon(1). CF(0) has three main subunits: a(1), b(2) and c(9-12). The alpha and beta chains form an alternating ring which encloses part of the gamma chain. CF(1) is attached to CF(0) by a central stalk formed by the gamma and epsilon chains, while a peripheral stalk is formed by the delta and b chains.

It is found in the cell membrane. It catalyses the reaction ATP + H2O + 4 H(+)(in) = ADP + phosphate + 5 H(+)(out). Its function is as follows. Produces ATP from ADP in the presence of a proton gradient across the membrane. The catalytic sites are hosted primarily by the beta subunits. The sequence is that of ATP synthase subunit beta from Leuconostoc citreum (strain KM20).